The chain runs to 189 residues: UPF0301 protein PFLU_5755 (189 aa).

This sequence belongs to the UPF0301 (AlgH) family.

The sequence is that of UPF0301 protein PFLU_5755 from Pseudomonas fluorescens (strain SBW25).